The chain runs to 102 residues: Small ribosomal subunit protein uS10 (102 aa).

It belongs to the universal ribosomal protein uS10 family. Part of the 30S ribosomal subunit.

In terms of biological role, involved in the binding of tRNA to the ribosomes. This is Small ribosomal subunit protein uS10 from Methylobacterium radiotolerans (strain ATCC 27329 / DSM 1819 / JCM 2831 / NBRC 15690 / NCIMB 10815 / 0-1).